Consider the following 344-residue polypeptide: Estradiol 17-beta-dehydrogenase 1 (344 aa).

3 to 32 provides a ligand contact to NAD(+); it reads STVVLITGCSSGIGLHLAVRLASDRSQSFK. Residue serine 143 coordinates substrate. Tyrosine 156 acts as the Proton acceptor in catalysis.

The protein belongs to the short-chain dehydrogenases/reductases (SDR) family. As to quaternary structure, homodimer.

It is found in the cytoplasm. The enzyme catalyses 17beta-estradiol + NAD(+) = estrone + NADH + H(+). The catalysed reaction is 17beta-estradiol + NADP(+) = estrone + NADPH + H(+). Its pathway is steroid biosynthesis; estrogen biosynthesis. Its function is as follows. Favors the reduction of estrogens and androgens. Uses preferentially NADH. The polypeptide is Estradiol 17-beta-dehydrogenase 1 (Hsd17b1) (Rattus norvegicus (Rat)).